The chain runs to 59 residues: UPF0391 membrane protein AZC_4184 (59 aa).

A run of 2 helical transmembrane segments spans residues 4–24 (WALT…TAVA) and 30–50 (IAKI…VMGF).

Belongs to the UPF0391 family.

Its subcellular location is the cell membrane. The protein is UPF0391 membrane protein AZC_4184 of Azorhizobium caulinodans (strain ATCC 43989 / DSM 5975 / JCM 20966 / LMG 6465 / NBRC 14845 / NCIMB 13405 / ORS 571).